Reading from the N-terminus, the 252-residue chain is Adapter protein MecA (252 aa).

Belongs to the MecA family. In terms of assembly, homodimer.

Enables the recognition and targeting of unfolded and aggregated proteins to the ClpC protease or to other proteins involved in proteolysis. This chain is Adapter protein MecA, found in Streptococcus uberis (strain ATCC BAA-854 / 0140J).